The following is a 199-amino-acid chain: Guanylate kinase (199 aa).

One can recognise a Guanylate kinase-like domain in the interval 19 to 198 (VTVAVVSGPT…AVAHLVELLS (180 aa)). Position 26-33 (26-33 (GPTAVGKG)) interacts with ATP.

Belongs to the guanylate kinase family.

It is found in the cytoplasm. The enzyme catalyses GMP + ATP = GDP + ADP. Functionally, essential for recycling GMP and indirectly, cGMP. The sequence is that of Guanylate kinase from Cutibacterium acnes (strain DSM 16379 / KPA171202) (Propionibacterium acnes).